A 325-amino-acid polypeptide reads, in one-letter code: MNSSFHLHFLDLNLNATEGNLSGPNVKNKSSPCEDMGIAVEVFLTLGVISLLENILVIGAIVKNKNLHSPMYFFVCSLAVADMLVSMSSAWETITIYLLNNKHLVIADAFVRHIDNVFDSMICISVVASMCSLLAIAVDRYVTIFYALRYHHIMTARRSGAIIAGIWAFCTGCGIVFILYSESTYVILCLISMFFAMLFLLVSLYIHMFLLARTHVKRIAALPRASSARQRTSMQGAVTVTMLLGVFTVCWAPFFLHLTLMLSCPQNLYCSCFMSHFNMYLILIMCNSVMDPLIYAFRSQEMRKTFKEIICCRGFRIACSFPRRD.

The Extracellular portion of the chain corresponds to 1–37 (MNSSFHLHFLDLNLNATEGNLSGPNVKNKSSPCEDMG). Residues Asn2, Asn15, Asn20, and Asn28 are each glycosylated (N-linked (GlcNAc...) asparagine). Residues 38 to 61 (IAVEVFLTLGVISLLENILVIGAI) traverse the membrane as a helical segment. The Cytoplasmic portion of the chain corresponds to 62 to 73 (VKNKNLHSPMYF). A helical transmembrane segment spans residues 74 to 97 (FVCSLAVADMLVSMSSAWETITIY). Over 98 to 114 (LLNNKHLVIADAFVRHI) the chain is Extracellular. A helical membrane pass occupies residues 115-138 (DNVFDSMICISVVASMCSLLAIAV). Residues 139-155 (DRYVTIFYALRYHHIMT) lie on the Cytoplasmic side of the membrane. Residues 156–179 (ARRSGAIIAGIWAFCTGCGIVFIL) traverse the membrane as a helical segment. Over 180–186 (YSESTYV) the chain is Extracellular. The helical transmembrane segment at 187 to 211 (ILCLISMFFAMLFLLVSLYIHMFLL) threads the bilayer. The Cytoplasmic portion of the chain corresponds to 212–239 (ARTHVKRIAALPRASSARQRTSMQGAVT). The chain crosses the membrane as a helical span at residues 240-265 (VTMLLGVFTVCWAPFFLHLTLMLSCP). Over 266 to 273 (QNLYCSCF) the chain is Extracellular. Residues 274–297 (MSHFNMYLILIMCNSVMDPLIYAF) form a helical membrane-spanning segment. Residues 298–325 (RSQEMRKTFKEIICCRGFRIACSFPRRD) lie on the Cytoplasmic side of the membrane. Residues Cys311 and Cys312 are each lipidated (S-palmitoyl cysteine).

Belongs to the G-protein coupled receptor 1 family.

Its subcellular location is the cell membrane. Receptor for MSH (alpha, beta and gamma) and ACTH. The activity of this receptor is mediated by G proteins which activate adenylate cyclase. This receptor is a possible mediator of the immunomodulation properties of melanocortins. This chain is Melanocortin receptor 5 (MC5R), found in Pan troglodytes (Chimpanzee).